The chain runs to 116 residues: Small ribosomal subunit protein uS13m (116 aa).

The interval 92 to 116 (HQDGSPLRGQRTHTNARTARKQIRK) is disordered.

This sequence belongs to the universal ribosomal protein uS13 family. In terms of assembly, part of the small ribosomal subunit.

It localises to the mitochondrion. Located at the top of the head of the small subunit, it contacts several helices of the 18S rRNA. This Triticum aestivum (Wheat) protein is Small ribosomal subunit protein uS13m (RPS13).